The chain runs to 328 residues: P2Y purinoceptor 6 (328 aa).

Over 1–27 the chain is Extracellular; sequence MEQDNGTIQAPGLPPTTCVYREDFKRL. Residue Asn-5 is glycosylated (N-linked (GlcNAc...) asparagine). Residues 28 to 48 form a helical membrane-spanning segment; that stretch reads LLTPVYSVVLVVGLPLNICVI. Topologically, residues 49 to 62 are cytoplasmic; it reads AQICASRRTLTRSA. The helical transmembrane segment at 63-83 threads the bilayer; it reads VYTLNLALADLMYACSLPLLI. The Extracellular portion of the chain corresponds to 84–101; that stretch reads YNYARGDHWPFGDLACRF. An intrachain disulfide couples Cys-99 to Cys-177. The chain crosses the membrane as a helical span at residues 102–122; the sequence is VRFLFYANLHGSILFLTCISF. The Cytoplasmic portion of the chain corresponds to 123–144; the sequence is QRYLGICHPLASWHKRGGRRAA. The chain crosses the membrane as a helical span at residues 145 to 165; sequence WVVCGVVWLAVTAQCLPTAVF. The Extracellular segment spans residues 166–194; sequence AATGIQRNRTVCYDLSPPILSTRYLPYGM. An N-linked (GlcNAc...) asparagine glycan is attached at Asn-173. A helical membrane pass occupies residues 195–215; it reads ALTVIGFLLPFIALLACYCRM. The Cytoplasmic segment spans residues 216–236; sequence ARRLCRQDGPAGPVAQERRSK. The chain crosses the membrane as a helical span at residues 237–257; sequence AARMAVVVAAVFAISFLPFHI. Residues 258–280 lie on the Extracellular side of the membrane; that stretch reads TKTAYLAVRSTPGVSCPVLETFA. A helical transmembrane segment spans residues 281 to 303; sequence AAYKGTRPFASVNSVLDPILFYF. Over 304–328 the chain is Cytoplasmic; the sequence is TQQKFRRQPHDLLQRLTAKWQRQRV.

It belongs to the G-protein coupled receptor 1 family.

It is found in the cell membrane. In terms of biological role, receptor for extracellular UTP &gt; ADP = 2-methylthio-ATP &gt; ADP-beta-S &gt; ATP = ATP-gamma-S. The activity of this receptor is mediated by G proteins which activate a phosphatidylinositol-calcium second messenger system. Functionally coupled to phospholipase C. The protein is P2Y purinoceptor 6 (P2ry6) of Mus musculus (Mouse).